We begin with the raw amino-acid sequence, 561 residues long: Laccase-1 (561 aa).

A signal peptide spans 1-20 (MKNSFFSSLAKFASLSLAFA). 2 Plastocyanin-like domains span residues 68-185 (VVQN…GPAT) and 191-337 (DLGM…YTGS). N-linked (GlcNAc...) asparagine glycans are attached at residues Asn71, Asn87, and Asn114. Cu cation-binding residues include His119, His121, His163, and His165. Residues Cys140 and Cys542 are joined by a disulfide bond. Residues Asn226, Asn284, Asn327, Asn391, and Asn398 are each glycosylated (N-linked (GlcNAc...) asparagine). Residues 396-525 (LLNWTDPTLL…ALQFVESESS (130 aa)) form the Plastocyanin-like 3 domain. Positions 445, 448, 450, 504, 505, 506, and 510 each coordinate Cu cation.

Belongs to the multicopper oxidase family. Requires Cu cation as cofactor.

It localises to the secreted. It catalyses the reaction 4 hydroquinone + O2 = 4 benzosemiquinone + 2 H2O. Its function is as follows. Lignin degradation and detoxification of lignin-derived products. The polypeptide is Laccase-1 (lcc1) (Botryotinia fuckeliana (Noble rot fungus)).